The primary structure comprises 498 residues: Angiopoietin-4 (498 aa).

An N-terminal signal peptide occupies residues 1 to 22; that stretch reads MPSPPAMLLGGLLLIVASTTVA. The tract at residues 51–80 is disordered; the sequence is EPEPCPPEPEAFGGSNSLQRDSPAATLNLG. The stretch at 85–109 forms a coiled coil; the sequence is QRMRQLEKMLENNTQWLQKLERYIQ. Asn96, Asn126, Asn158, Asn247, Asn295, Asn306, Asn332, and Asn424 each carry an N-linked (GlcNAc...) asparagine glycan. Residues 186-254 adopt a coiled-coil conformation; that stretch reads HELHRLQGHN…SSNSSLLQRQ (69 aa). The 221-residue stretch at 277–497 folds into the Fibrinogen C-terminal domain; sequence RAADQLFQDC…TTRMMVRPSG (221 aa). Cysteines 286 and 315 form a disulfide. Cys439 and Cys452 form a disulfide bridge.

In terms of assembly, homodimer; disulfide-linked. Interacts with TEK/TIE2.

The protein resides in the secreted. Binds to TEK/TIE2, modulating ANGPT1 signaling. Can induce tyrosine phosphorylation of TEK/TIE2. Promotes endothelial cell survival, migration and angiogenesis. This is Angiopoietin-4 (ANGPT4) from Bos taurus (Bovine).